The chain runs to 251 residues: tRNA-cytidine(32) 2-sulfurtransferase 2 (251 aa).

The PP-loop motif motif lies at 33–38 (SGGKDS). 3 residues coordinate [4Fe-4S] cluster: cysteine 108, cysteine 111, and cysteine 199.

The protein belongs to the TtcA family. As to quaternary structure, homodimer. It depends on Mg(2+) as a cofactor. [4Fe-4S] cluster is required as a cofactor.

Its subcellular location is the cytoplasm. It catalyses the reaction cytidine(32) in tRNA + S-sulfanyl-L-cysteinyl-[cysteine desulfurase] + AH2 + ATP = 2-thiocytidine(32) in tRNA + L-cysteinyl-[cysteine desulfurase] + A + AMP + diphosphate + H(+). Its pathway is tRNA modification. In terms of biological role, catalyzes the ATP-dependent 2-thiolation of cytidine in position 32 of tRNA, to form 2-thiocytidine (s(2)C32). The sulfur atoms are provided by the cysteine/cysteine desulfurase (IscS) system. The chain is tRNA-cytidine(32) 2-sulfurtransferase 2 from Francisella tularensis subsp. tularensis (strain FSC 198).